The chain runs to 382 residues: Succinate--CoA ligase [ADP-forming] subunit beta (382 aa).

One can recognise an ATP-grasp domain in the interval 9 to 240 (KELFAKYGVK…PRDITEFEAY (232 aa)). ATP is bound by residues K45, 52 to 54 (GRG), L94, and E99. Residues N193 and D207 each contribute to the Mg(2+) site. Substrate-binding positions include N260 and 317 to 319 (GIT).

Belongs to the succinate/malate CoA ligase beta subunit family. As to quaternary structure, heterotetramer of two alpha and two beta subunits. Mg(2+) serves as cofactor.

The catalysed reaction is succinate + ATP + CoA = succinyl-CoA + ADP + phosphate. The enzyme catalyses GTP + succinate + CoA = succinyl-CoA + GDP + phosphate. It participates in carbohydrate metabolism; tricarboxylic acid cycle; succinate from succinyl-CoA (ligase route): step 1/1. Its function is as follows. Succinyl-CoA synthetase functions in the citric acid cycle (TCA), coupling the hydrolysis of succinyl-CoA to the synthesis of either ATP or GTP and thus represents the only step of substrate-level phosphorylation in the TCA. The beta subunit provides nucleotide specificity of the enzyme and binds the substrate succinate, while the binding sites for coenzyme A and phosphate are found in the alpha subunit. The protein is Succinate--CoA ligase [ADP-forming] subunit beta of Pyrobaculum calidifontis (strain DSM 21063 / JCM 11548 / VA1).